Consider the following 556-residue polypeptide: Insulin-like growth factor 2 mRNA-binding protein 2 (556 aa).

RRM domains follow at residues 3-76 (NKLY…YSVS) and 82-157 (RKIQ…YIPD). Ser11 is subject to Phosphoserine. The segment at 156 to 188 (PDEEVSSPSPPQRAQRGDHSSREQGHAPGGTSQ) is disordered. Phosphoserine occurs at positions 162 and 164. Residues 170 to 180 (QRGDHSSREQG) are compositionally biased toward basic and acidic residues. 4 consecutive KH domains span residues 193–258 (DFPL…CRMI), 274–341 (EIPL…EIEI), 384–449 (QEIV…QGRI), and 466–532 (KLEA…QRKI). Thr507 bears the Phosphothreonine mark.

It belongs to the RRM IMP/VICKZ family. In terms of assembly, can form homooligomers and heterooligomers with IGF2BP1 and IGF2BP3 in an RNA-dependent manner. Interacts with HNRPD. Interacts with IGF2BP1. Interacts with ELAVL1, DHX9, HNRNPU, MATR3 and PABPC1.

It is found in the nucleus. The protein localises to the cytoplasm. It localises to the P-body. The protein resides in the stress granule. In terms of biological role, RNA-binding factor that recruits target transcripts to cytoplasmic protein-RNA complexes (mRNPs). This transcript 'caging' into mRNPs allows mRNA transport and transient storage. It also modulates the rate and location at which target transcripts encounter the translational apparatus and shields them from endonuclease attacks or microRNA-mediated degradation. Preferentially binds to N6-methyladenosine (m6A)-containing mRNAs and increases their stability. Binds to the 5'-UTR of the insulin-like growth factor 2 (IGF2) mRNAs. Binding is isoform-specific. Binds to beta-actin/ACTB and MYC transcripts. Increases MYC mRNA stability by binding to the coding region instability determinant (CRD) and binding is enhanced by m6A-modification of the CRD. The polypeptide is Insulin-like growth factor 2 mRNA-binding protein 2 (IGF2BP2) (Pongo abelii (Sumatran orangutan)).